We begin with the raw amino-acid sequence, 303 residues long: Uricase (303 aa).

A2 carries the post-translational modification N-acetylalanine. Residues K10 and K23 each carry the N6-acetyllysine; alternate modification. An N6-succinyllysine; alternate mark is found at K10 and K23. Residue K23 is the Charge relay system of the active site. N6-acetyllysine occurs at positions 27 and 36. 2 positions are modified to phosphoserine: S39 and S63. The active-site Charge relay system is T68. Urate contacts are provided by T68 and D69. N6-acetyllysine is present on residues K118, K122, and K164. F170 is a urate binding site. N6-acetyllysine occurs at positions 175 and 185. R187 contributes to the urate binding site. K220 carries the N6-acetyllysine; alternate modification. The residue at position 220 (K220) is an N6-succinyllysine; alternate. Phosphoserine is present on S231. Residues V234, Q235, and N261 each coordinate urate. H263 acts as the Charge relay system in catalysis. N6-acetyllysine is present on K277. At Y288 the chain carries Phosphotyrosine. The short motif at 301–303 (SRL) is the Microbody targeting signal element.

The protein belongs to the uricase family. Expressed in liver. Not detected in other tissues tested.

The protein resides in the peroxisome. It carries out the reaction urate + O2 + H2O = 5-hydroxyisourate + H2O2. Its pathway is purine metabolism; urate degradation; (S)-allantoin from urate: step 1/3. With respect to regulation, competitively inhibited by xanthine. Functionally, catalyzes the oxidation of uric acid to 5-hydroxyisourate, which is further processed to form (S)-allantoin. The sequence is that of Uricase (Uox) from Rattus norvegicus (Rat).